A 799-amino-acid chain; its full sequence is LPS-assembly protein LptD (799 aa).

An N-terminal signal peptide occupies residues 1–34 (MMHELDLRPHLARFAQRPLALLAWALLQGTSVNA).

It belongs to the LptD family. As to quaternary structure, component of the lipopolysaccharide transport and assembly complex. Interacts with LptE and LptA.

It is found in the cell outer membrane. Together with LptE, is involved in the assembly of lipopolysaccharide (LPS) at the surface of the outer membrane. The polypeptide is LPS-assembly protein LptD (Albidiferax ferrireducens (strain ATCC BAA-621 / DSM 15236 / T118) (Rhodoferax ferrireducens)).